Consider the following 325-residue polypeptide: Glutarate 2-hydroxylase (325 aa).

The Fe cation site is built by His-160, Asp-162, and His-292.

It belongs to the glutarate hydroxylase family. Homotetramer. It depends on Fe(2+) as a cofactor.

It carries out the reaction glutarate + 2-oxoglutarate + O2 = (S)-2-hydroxyglutarate + succinate + CO2. Its pathway is amino-acid degradation. Its function is as follows. Acts as an alpha-ketoglutarate-dependent dioxygenase catalyzing hydroxylation of glutarate (GA) to L-2-hydroxyglutarate (L2HG). Functions in a L-lysine degradation pathway that proceeds via cadaverine, glutarate and L-2-hydroxyglutarate. The polypeptide is Glutarate 2-hydroxylase (Escherichia fergusonii (strain ATCC 35469 / DSM 13698 / CCUG 18766 / IAM 14443 / JCM 21226 / LMG 7866 / NBRC 102419 / NCTC 12128 / CDC 0568-73)).